Here is a 1114-residue protein sequence, read N- to C-terminus: OTU domain-containing protein 4 (1114 aa).

M1 carries the N-acetylmethionine modification. The segment at 1-22 (MEAAVGVPDGGDQGGAGPREDA) is disordered. Over residues 8-17 (PDGGDQGGAG) the composition is skewed to gly residues. Positions 34–155 (LYRKLVAKDG…GNHYDIVYPI (122 aa)) constitute an OTU domain. The tract at residues 39–45 (VAKDGSC) is cys-loop. D42 is an active-site residue. C45 acts as the Nucleophile in catalysis. The interval 94–104 (LENPQEWVGQV) is variable-loop. Phosphotyrosine is present on Y120. Phosphoserine is present on residues S126 and S128. Position 131 is a phosphothreonine (T131). The segment at 143–148 (FSNGNH) is his-loop. H148 is an active-site residue. S166, S199, S202, S204, and S341 each carry phosphoserine. Positions 323–449 (KHTSKNLKAP…FGLSPEERRE (127 aa)) are disordered. Positions 392–404 (FSSHSSGSQSQKF) are enriched in low complexity. Over residues 420–435 (RKPDRERVEDFDHTSR) the composition is skewed to basic and acidic residues. The residue at position 439 (Y439) is a Phosphotyrosine. S443 carries the post-translational modification Phosphoserine. Y460 bears the Phosphotyrosine mark. The disordered stretch occupies residues 472–567 (ALSSSSVNQS…PAEQKPAEHV (96 aa)). The span at 474 to 487 (SSSSVNQSASQSSN) shows a compositional bias: low complexity. Basic and acidic residues predominate over residues 496–529 (HVGDRKGSRRRMDTEERKDKDSIHGHSQLDKRPE). 3 positions are modified to phosphoserine: S546, S893, and S900. Residues 911-1114 (EFPEARGEHV…MGDGHRGQHT (204 aa)) are disordered. Basic and acidic residues-rich tracts occupy residues 913–922 (PEARGEHVHS) and 969–1000 (NRERETVPVELEPKRTIQSLKEKTEKVKDPKT). A phosphoserine mark is found at S1006, S1011, S1014, S1023, and S1024. Residues 1039–1048 (SKQFYNQTYG) are compositionally biased toward polar residues. S1049 carries the phosphoserine modification. Composition is skewed to basic and acidic residues over residues 1067 to 1086 (VRSEESWKGQPSRSRDEGYQ) and 1096 to 1114 (FRGDRRRSGMGDGHRGQHT).

As to quaternary structure, interacts with MYD88; the interaction is direct. Interacts with ALKBH3; the interaction is direct. Interacts with USP7; the interaction is direct. Interacts with USP9X; the interaction is direct. Post-translationally, phosphorylated on Ser-202 and Ser-204 likely by CSNK2A1-CSNK2A2 serine/threonine-protein kinase complex. Activates 'Lys-63'-specific deubiquitinase activity.

The protein localises to the cytoplasm. Its subcellular location is the nucleus. It carries out the reaction Thiol-dependent hydrolysis of ester, thioester, amide, peptide and isopeptide bonds formed by the C-terminal Gly of ubiquitin (a 76-residue protein attached to proteins as an intracellular targeting signal).. Phosphorylation on Ser-202 and Ser-204 induces 'Lys-63'-specific deubiquitinase activity. Deubiquitinase which hydrolyzes the isopeptide bond between the ubiquitin C-terminus and the lysine epsilon-amino group of the target protein. May negatively regulate inflammatory and pathogen recognition signaling in innate immune response. Upon phosphorylation at Ser-202 and Ser-204 residues, via IL-1 receptor and Toll-like receptor signaling pathway, specifically deubiquitinates 'Lys-63'-polyubiquitinated MYD88 adapter protein triggering down-regulation of NF-kappa-B-dependent transcription of inflammatory mediators. Independently of the catalytic activity, acts as a scaffold for alternative deubiquitinases to assemble specific deubiquitinase-substrate complexes. Associates with USP7 and USP9X deubiquitinases to stabilize alkylation repair enzyme ALKBH3, thereby promoting the repair of alkylated DNA lesions. This chain is OTU domain-containing protein 4, found in Homo sapiens (Human).